The primary structure comprises 141 residues: U1 small nuclear ribonucleoprotein C (141 aa).

The Matrin-type zinc-finger motif lies at 4 to 36; sequence YYCEYCDKYLTHDSPSVRKSHTIGKVHQQAVTL. The disordered stretch occupies residues 69–141; sequence LLPPNMVPGQ…SNSPPSNNDQ (73 aa). Residues 83–97 show a composition bias toward pro residues; that stretch reads MMPPGQFPFPPPPGQ. 2 stretches are compositionally biased toward low complexity: residues 100 to 110 and 124 to 141; these read GGMPPHQQQPM and QQSA…NNDQ.

Belongs to the U1 small nuclear ribonucleoprotein C family. As to quaternary structure, component of the U1 snRNP. The U1 snRNP is composed of the U1 snRNA and the 7 core Sm proteins SNRPB, SNRPD1, SNRPD2, SNRPD3, SNRPE, SNRPF and SNRPG that assemble in a heptameric protein ring on the Sm site of the small nuclear RNA to form the core snRNP, and at least 3 U1 snRNP-specific proteins SNRNP70/U1-70K, SNRPA/U1-A and SNRPC/U1-C. SNRPC/U1-C interacts with U1 snRNA and the 5' splice-site region of the pre-mRNA.

The protein resides in the nucleus. In terms of biological role, component of the spliceosomal U1 snRNP, which is essential for recognition of the pre-mRNA 5' splice-site and the subsequent assembly of the spliceosome. SNRPC/U1-C is directly involved in initial 5' splice-site recognition for both constitutive and regulated alternative splicing. The interaction with the 5' splice-site seems to precede base-pairing between the pre-mRNA and the U1 snRNA. Stimulates commitment or early (E) complex formation by stabilizing the base pairing of the 5' end of the U1 snRNA and the 5' splice-site region. In Heterostelium pallidum (strain ATCC 26659 / Pp 5 / PN500) (Cellular slime mold), this protein is U1 small nuclear ribonucleoprotein C.